Consider the following 193-residue polypeptide: Peptidyl-tRNA hydrolase (193 aa).

Tyr-21 is a binding site for tRNA. Residue His-26 is the Proton acceptor of the active site. Residues Tyr-72, Asn-74, and Asn-120 each coordinate tRNA.

Belongs to the PTH family. As to quaternary structure, monomer.

The protein resides in the cytoplasm. It catalyses the reaction an N-acyl-L-alpha-aminoacyl-tRNA + H2O = an N-acyl-L-amino acid + a tRNA + H(+). Its function is as follows. Hydrolyzes ribosome-free peptidyl-tRNAs (with 1 or more amino acids incorporated), which drop off the ribosome during protein synthesis, or as a result of ribosome stalling. Functionally, catalyzes the release of premature peptidyl moieties from peptidyl-tRNA molecules trapped in stalled 50S ribosomal subunits, and thus maintains levels of free tRNAs and 50S ribosomes. This Nocardia farcinica (strain IFM 10152) protein is Peptidyl-tRNA hydrolase.